The following is a 298-amino-acid chain: Junctional adhesion molecule B (298 aa).

An N-terminal signal peptide occupies residues 1–28; that stretch reads MARRSRHRLLLLLLRYLVVALGYHKAYG. Residues 29–238 are Extracellular-facing; it reads FSAPKDQQVV…RMQVDDLNIS (210 aa). The 96-residue stretch at 32-127 folds into the Ig-like V-type domain; that stretch reads PKDQQVVTAV…GQNLEEDTVT (96 aa). Disulfide bonds link C50/C109 and C155/C214. N98, N187, and N236 each carry an N-linked (GlcNAc...) asparagine glycan. An Ig-like C2-type domain is found at 134–238; that stretch reads PAVPSCEVPS…RMQVDDLNIS (105 aa). Residues 239-259 traverse the membrane as a helical segment; the sequence is GIIAAVVVVALVISVCGLGVC. At 260–298 the chain is on the cytoplasmic side; it reads YAQRKGYFSKETSFQKSNSSSKATTMSENDFKHTKSFII.

The protein belongs to the immunoglobulin superfamily. As to expression, highly expressed in heart, placenta, lung, foreskin and lymph node. Prominently expressed on high endothelial venules and also present on the endothelia of other vessels (at protein level). Also expressed in the brain in the caudate nuclei.

Its subcellular location is the cell membrane. The protein resides in the cell junction. It is found in the tight junction. In terms of biological role, junctional adhesion protein that mediates heterotypic cell-cell interactions with its cognate receptor JAM3 to regulate different cellular processes. Plays a role in homing and mobilization of hematopoietic stem and progenitor cells within the bone marrow. At the surface of bone marrow stromal cells, it contributes to the retention of the hematopoietic stem and progenitor cells expressing JAM3. Plays a central role in leukocytes extravasation by facilitating not only transmigration but also tethering and rolling of leukocytes along the endothelium. Tethering and rolling of leukocytes are dependent on the binding by JAM2 of the integrin alpha-4/beta-1. Plays a role in spermatogenesis where JAM2 and JAM3, which are respectively expressed by Sertoli and germ cells, mediate an interaction between both cell types and play an essential role in the anchorage of germ cells onto Sertoli cells and the assembly of cell polarity complexes during spermatid differentiation. Also functions as an inhibitory somatodendritic cue that prevents the myelination of non-axonal parts of neurons. During myogenesis, it is involved in myocyte fusion. May also play a role in angiogenesis. The polypeptide is Junctional adhesion molecule B (Homo sapiens (Human)).